Reading from the N-terminus, the 601-residue chain is Elongation factor 4 (601 aa).

The tr-type G domain occupies 7 to 189 (RNIRNFSIIA…AIVHRIPPPK (183 aa)). GTP contacts are provided by residues 19-24 (DHGKST) and 136-139 (NKID).

It belongs to the TRAFAC class translation factor GTPase superfamily. Classic translation factor GTPase family. LepA subfamily.

The protein localises to the cell inner membrane. It catalyses the reaction GTP + H2O = GDP + phosphate + H(+). Its function is as follows. Required for accurate and efficient protein synthesis under certain stress conditions. May act as a fidelity factor of the translation reaction, by catalyzing a one-codon backward translocation of tRNAs on improperly translocated ribosomes. Back-translocation proceeds from a post-translocation (POST) complex to a pre-translocation (PRE) complex, thus giving elongation factor G a second chance to translocate the tRNAs correctly. Binds to ribosomes in a GTP-dependent manner. This chain is Elongation factor 4, found in Xanthomonas campestris pv. campestris (strain ATCC 33913 / DSM 3586 / NCPPB 528 / LMG 568 / P 25).